Here is a 118-residue protein sequence, read N- to C-terminus: Large ribosomal subunit protein bL20 (118 aa).

This sequence belongs to the bacterial ribosomal protein bL20 family.

In terms of biological role, binds directly to 23S ribosomal RNA and is necessary for the in vitro assembly process of the 50S ribosomal subunit. It is not involved in the protein synthesizing functions of that subunit. The sequence is that of Large ribosomal subunit protein bL20 from Marinomonas sp. (strain MWYL1).